We begin with the raw amino-acid sequence, 523 residues long: Bifunctional purine biosynthesis protein PurH (523 aa).

The 152-residue stretch at 1–152 (MSTDDGRRPI…KNHPSAAVVT (152 aa)) folds into the MGS-like domain.

This sequence belongs to the PurH family.

The catalysed reaction is (6R)-10-formyltetrahydrofolate + 5-amino-1-(5-phospho-beta-D-ribosyl)imidazole-4-carboxamide = 5-formamido-1-(5-phospho-D-ribosyl)imidazole-4-carboxamide + (6S)-5,6,7,8-tetrahydrofolate. It carries out the reaction IMP + H2O = 5-formamido-1-(5-phospho-D-ribosyl)imidazole-4-carboxamide. Its pathway is purine metabolism; IMP biosynthesis via de novo pathway; 5-formamido-1-(5-phospho-D-ribosyl)imidazole-4-carboxamide from 5-amino-1-(5-phospho-D-ribosyl)imidazole-4-carboxamide (10-formyl THF route): step 1/1. It participates in purine metabolism; IMP biosynthesis via de novo pathway; IMP from 5-formamido-1-(5-phospho-D-ribosyl)imidazole-4-carboxamide: step 1/1. This Mycobacterium bovis (strain BCG / Pasteur 1173P2) protein is Bifunctional purine biosynthesis protein PurH.